A 1260-amino-acid polypeptide reads, in one-letter code: uncharacterized protein (1260 aa).

The protein localises to the plastid. It localises to the chloroplast. This is an uncharacterized protein from Ostreococcus tauri.